We begin with the raw amino-acid sequence, 166 residues long: NAD(P)H-quinone oxidoreductase subunit I, chloroplastic (166 aa).

4Fe-4S ferredoxin-type domains lie at 55-84 (GRIH…VDWK) and 95-124 (LNYS…MTEE). The [4Fe-4S] cluster site is built by Cys-64, Cys-67, Cys-70, Cys-74, Cys-104, Cys-107, Cys-110, and Cys-114.

It belongs to the complex I 23 kDa subunit family. NDH is composed of at least 16 different subunits, 5 of which are encoded in the nucleus. It depends on [4Fe-4S] cluster as a cofactor.

The protein localises to the plastid. The protein resides in the chloroplast thylakoid membrane. It carries out the reaction a plastoquinone + NADH + (n+1) H(+)(in) = a plastoquinol + NAD(+) + n H(+)(out). It catalyses the reaction a plastoquinone + NADPH + (n+1) H(+)(in) = a plastoquinol + NADP(+) + n H(+)(out). Functionally, NDH shuttles electrons from NAD(P)H:plastoquinone, via FMN and iron-sulfur (Fe-S) centers, to quinones in the photosynthetic chain and possibly in a chloroplast respiratory chain. The immediate electron acceptor for the enzyme in this species is believed to be plastoquinone. Couples the redox reaction to proton translocation, and thus conserves the redox energy in a proton gradient. The polypeptide is NAD(P)H-quinone oxidoreductase subunit I, chloroplastic (Tridax balbisioides (Coatbuttons)).